Reading from the N-terminus, the 625-residue chain is 1-deoxy-D-xylulose-5-phosphate synthase (625 aa).

Residues histidine 84 and 125-127 (GHS) contribute to the thiamine diphosphate site. A Mg(2+)-binding site is contributed by aspartate 156. Residues 157 to 158 (GA), asparagine 185, phenylalanine 292, and glutamate 373 each bind thiamine diphosphate. Residue asparagine 185 participates in Mg(2+) binding.

Belongs to the transketolase family. DXPS subfamily. Homodimer. Requires Mg(2+) as cofactor. The cofactor is thiamine diphosphate.

The enzyme catalyses D-glyceraldehyde 3-phosphate + pyruvate + H(+) = 1-deoxy-D-xylulose 5-phosphate + CO2. Its pathway is metabolic intermediate biosynthesis; 1-deoxy-D-xylulose 5-phosphate biosynthesis; 1-deoxy-D-xylulose 5-phosphate from D-glyceraldehyde 3-phosphate and pyruvate: step 1/1. Catalyzes the acyloin condensation reaction between C atoms 2 and 3 of pyruvate and glyceraldehyde 3-phosphate to yield 1-deoxy-D-xylulose-5-phosphate (DXP). In Marinomonas sp. (strain MWYL1), this protein is 1-deoxy-D-xylulose-5-phosphate synthase.